Consider the following 364-residue polypeptide: DNA replication and repair protein RecF (364 aa).

An ATP-binding site is contributed by 30-37; that stretch reads GENAQGKT.

This sequence belongs to the RecF family.

It localises to the cytoplasm. Functionally, the RecF protein is involved in DNA metabolism; it is required for DNA replication and normal SOS inducibility. RecF binds preferentially to single-stranded, linear DNA. It also seems to bind ATP. This Streptococcus suis (strain 98HAH33) protein is DNA replication and repair protein RecF.